Reading from the N-terminus, the 613-residue chain is MIPYRSRTSTHGRNMAGARGLWRATGMTDSDFGKPIIAVVNSFTQFVPGHVHLKDLGQLVAREIEAAGGVAKEFNTIAVDDGIAMGHDGMLYSLPSREIIADSVEYMVNAHCADAMVCISNCDKITPGMMMAAMRLDIPVVFVSGGPMEAGKVNIDGELRAVDLIDAMIEAANPDRTDAEVDEFEKNACPTCGSCSGMFTANSMNCLAEALGLALPGNGSTLATHADREALFRRAGRRIVELTKAYYEGGDTGVSARGIATKAAFENAITLDIAMGGSTNTILHLLAMAREGEVDFTLADIDRLSRVTPCLCKVAPAVQNVHMEDVHRAGGIFGILGELGRAGKLDTSVRTIHEDTMAEALSKWDIAVTNNPEVQELFLAAPGGVRTTQAFSQARRYKDLDTDREKGVIRSAKHAFSKDGGLAVLFGNIAEMGCVVKTAGVDDSILKFSGPAVICESQEEACERILKKRVKAGDVVIIRYEGPRGGPGMQEMLYPTSYLKAMQLGKECALITDGRFSGGTSGLSIGHVSPEAAEGGAIGLLHEGDIIEIDIPNRTINAKVSAEEFAKRRAEMDAKGAAAWKPVEERPRKVSRALKVYAAHVGNASLGAVRLDP.

Residue aspartate 81 coordinates Mg(2+). [2Fe-2S] cluster is bound at residue cysteine 122. The Mg(2+) site is built by aspartate 123 and lysine 124. An N6-carboxylysine modification is found at lysine 124. Cysteine 195 contributes to the [2Fe-2S] cluster binding site. Residue glutamate 491 coordinates Mg(2+). Catalysis depends on serine 517, which acts as the Proton acceptor.

Belongs to the IlvD/Edd family. As to quaternary structure, homodimer. The cofactor is [2Fe-2S] cluster. It depends on Mg(2+) as a cofactor.

It catalyses the reaction (2R)-2,3-dihydroxy-3-methylbutanoate = 3-methyl-2-oxobutanoate + H2O. It carries out the reaction (2R,3R)-2,3-dihydroxy-3-methylpentanoate = (S)-3-methyl-2-oxopentanoate + H2O. It functions in the pathway amino-acid biosynthesis; L-isoleucine biosynthesis; L-isoleucine from 2-oxobutanoate: step 3/4. The protein operates within amino-acid biosynthesis; L-valine biosynthesis; L-valine from pyruvate: step 3/4. In terms of biological role, functions in the biosynthesis of branched-chain amino acids. Catalyzes the dehydration of (2R,3R)-2,3-dihydroxy-3-methylpentanoate (2,3-dihydroxy-3-methylvalerate) into 2-oxo-3-methylpentanoate (2-oxo-3-methylvalerate) and of (2R)-2,3-dihydroxy-3-methylbutanoate (2,3-dihydroxyisovalerate) into 2-oxo-3-methylbutanoate (2-oxoisovalerate), the penultimate precursor to L-isoleucine and L-valine, respectively. This is Dihydroxy-acid dehydratase from Hyphomonas neptunium (strain ATCC 15444).